Consider the following 399-residue polypeptide: L-asparaginase-like protein GE13669 (399 aa).

Residues 1–22 (MLAQSCCLRLLILLLLFKSTCS) form the signal peptide. 3 disulfides stabilise this stretch: C90–C95, C189–C205, and C344–C371.

Belongs to the Ntn-hydrolase family.

This Drosophila yakuba (Fruit fly) protein is L-asparaginase-like protein GE13669.